We begin with the raw amino-acid sequence, 301 residues long: NDP-polyphosphate phosphotransferase 3 (301 aa).

A compositionally biased stretch (basic and acidic residues) spans 1 to 12 (MNRNGSTKDPRR). The interval 1–21 (MNRNGSTKDPRRMTGAATGEI) is disordered.

It belongs to the polyphosphate kinase 2 (PPK2) family. Class I subfamily. Mg(2+) is required as a cofactor.

The catalysed reaction is [phosphate](n) + ATP = [phosphate](n+1) + ADP. It catalyses the reaction [phosphate](n) + CTP = [phosphate](n+1) + CDP. It carries out the reaction [phosphate](n) + GTP = [phosphate](n+1) + GDP. The enzyme catalyses [phosphate](n) + UTP = [phosphate](n+1) + UDP. Uses inorganic polyphosphate (polyP) as a donor to convert NDP to NTP. PolyP hydrolysis is slightly faster with UDP, but it can also use ADP, GDP and CDP. This is NDP-polyphosphate phosphotransferase 3 from Ruegeria pomeroyi (strain ATCC 700808 / DSM 15171 / DSS-3) (Silicibacter pomeroyi).